Here is a 113-residue protein sequence, read N- to C-terminus: Non-specific lipid-transfer protein (113 aa).

The first 24 residues, Ala-1 to Ile-24, serve as a signal peptide directing secretion. Disulfide bonds link Cys-26–Cys-73, Cys-36–Cys-50, Cys-51–Cys-96, and Cys-71–Cys-110. Asp-30 carries the Cis-14-hydroxy-10,13-dioxo-7-heptadecenoic acid aspartate ester lipid modification.

Belongs to the plant LTP family.

Plant non-specific lipid-transfer proteins transfer phospholipids as well as galactolipids across membranes. May play a role in wax or cutin deposition in the cell walls of expanding epidermal cells and certain secretory tissues. The protein is Non-specific lipid-transfer protein of Triticum aestivum (Wheat).